The primary structure comprises 267 residues: Interleukin-2 receptor subunit alpha (267 aa).

An N-terminal signal peptide occupies residues 1-21; the sequence is MEPHLLMLGFLSFTIVPGCWA. Residues 22–79 enclose the Sushi 1 domain; it reads ELCLYDPPEVPNATFKALSYKNGTILNCECKRGFRRLNELVYMACLGNSWSNNCQCTS. The Extracellular portion of the chain corresponds to 22–235; that stretch reads ELCLYDPPEV…ETFVFTKEYQ (214 aa). 3 disulfide bridges follow: Cys24–Cys66, Cys49–Cys75, and Cys51–Cys77. Asn33 and Asn43 each carry an N-linked (GlcNAc...) asparagine glycan. Polar residues predominate over residues 82–93; it reads HDNSREQVTPQP. The interval 82-108 is disordered; the sequence is HDNSREQVTPQPEGQKEQQTTDTQKST. A compositionally biased stretch (low complexity) spans 98 to 108; that stretch reads EQQTTDTQKST. One can recognise a Sushi 2 domain in the interval 118-181; that stretch reads GHCREPPPWR…WTHPQLTCVD (64 aa). Disulfide bonds link Cys120-Cys163 and Cys147-Cys179. The interval 191 to 215 is disordered; it reads SEESQGSRNSFPESEASCPTPNTDF. Positions 192-215 are enriched in polar residues; that stretch reads EESQGSRNSFPESEASCPTPNTDF. The helical transmembrane segment at 236 to 256 threads the bilayer; sequence VAVASCIFLLLSILLLSGFTW. Over 257 to 267 the chain is Cytoplasmic; that stretch reads QHRWRKSRRTI.

In terms of assembly, non-covalent dimer of an alpha and a beta subunit. IL2R exists in 3 different forms: a high affinity dimer, an intermediate affinity monomer (beta subunit), and a low affinity monomer (alpha subunit). The high and intermediate affinity forms also associate with a gamma subunit.

It localises to the membrane. Functionally, receptor for interleukin-2. The receptor is involved in the regulation of immune tolerance by controlling regulatory T cells (TREGs) activity. TREGs suppress the activation and expansion of autoreactive T-cells. This chain is Interleukin-2 receptor subunit alpha (Il2ra), found in Rattus norvegicus (Rat).